A 271-amino-acid polypeptide reads, in one-letter code: Troponin T, fast skeletal muscle (271 aa).

Acidic residues predominate over residues 1-21 (MSDEEVEHVEEEYEEEEEAQE). The tract at residues 1-74 (MSDEEVEHVE…EKVDFDDIQK (74 aa)) is disordered. Residue serine 2 is modified to N-acetylserine. The residue at position 2 (serine 2) is a Phosphoserine. Composition is skewed to basic and acidic residues over residues 29 to 53 (EVHE…EKPR) and 62 to 74 (PEGE…DIQK). A Phosphoserine modification is found at serine 90. Residues 113 to 155 (RAERAEQQRIRAEKERERQNRLAEEKARREEEEAKRRAEDDLK) are compositionally biased toward basic and acidic residues. The disordered stretch occupies residues 113-192 (RAERAEQQRI…TAREMKKKVL (80 aa)). A phosphoserine mark is found at serine 161, serine 168, and serine 169. Positions 183–192 (TAREMKKKVL) are enriched in basic and acidic residues. Position 205 is a phosphoserine (serine 205). Residue tyrosine 221 is modified to Phosphotyrosine. Residues 249–271 (DQAQKHSKKAGTTPKGKVGGRWK) are disordered.

Belongs to the troponin T family.

Troponin T is the tropomyosin-binding subunit of troponin, the thin filament regulatory complex which confers calcium-sensitivity to striated muscle actomyosin ATPase activity. The protein is Troponin T, fast skeletal muscle (TNNT3) of Sus scrofa (Pig).